Here is a 370-residue protein sequence, read N- to C-terminus: Biotin synthase (370 aa).

In terms of domain architecture, Radical SAM core spans 56–283; sequence NAVQVSTLLS…KSHVRLSAGR (228 aa). Cys71, Cys75, and Cys78 together coordinate [4Fe-4S] cluster. [2Fe-2S] cluster is bound by residues Cys115, Cys146, Cys206, and Arg278. Residues 327–344 show a composition bias toward basic and acidic residues; the sequence is GLHPEPSDPHADDAHRDD. Positions 327–346 are disordered; sequence GLHPEPSDPHADDAHRDDEQ.

This sequence belongs to the radical SAM superfamily. Biotin synthase family. As to quaternary structure, homodimer. [4Fe-4S] cluster is required as a cofactor. It depends on [2Fe-2S] cluster as a cofactor.

It catalyses the reaction (4R,5S)-dethiobiotin + (sulfur carrier)-SH + 2 reduced [2Fe-2S]-[ferredoxin] + 2 S-adenosyl-L-methionine = (sulfur carrier)-H + biotin + 2 5'-deoxyadenosine + 2 L-methionine + 2 oxidized [2Fe-2S]-[ferredoxin]. It functions in the pathway cofactor biosynthesis; biotin biosynthesis; biotin from 7,8-diaminononanoate: step 2/2. Functionally, catalyzes the conversion of dethiobiotin (DTB) to biotin by the insertion of a sulfur atom into dethiobiotin via a radical-based mechanism. The chain is Biotin synthase from Chromohalobacter salexigens (strain ATCC BAA-138 / DSM 3043 / CIP 106854 / NCIMB 13768 / 1H11).